We begin with the raw amino-acid sequence, 74 residues long: uncharacterized protein (74 aa).

Positions 25–62 (QQTIDRLAGLELRMKQLIRAIEVNNELLRTMQEQQNRV) form a coiled coil.

This is an uncharacterized protein from Bacillus subtilis (strain 168).